A 171-amino-acid polypeptide reads, in one-letter code: uncharacterized protein (171 aa).

Belongs to the transferase hexapeptide repeat family.

This is an uncharacterized protein from Bacillus subtilis (strain 168).